We begin with the raw amino-acid sequence, 633 residues long: Extracellular metalloproteinase 3 (633 aa).

Residues 1–18 (MHGLLLAGLLALPMNVLA) form the signal peptide. Positions 19–246 (HPAEQHASNV…VHNVVDYVAS (228 aa)) are excised as a propeptide. An N-linked (GlcNAc...) asparagine glycan is attached at asparagine 410. Histidine 429 is a Zn(2+) binding site. Glutamate 430 is a catalytic residue. Histidine 433 lines the Zn(2+) pocket. N-linked (GlcNAc...) asparagine glycosylation is found at asparagine 480 and asparagine 622.

The protein belongs to the peptidase M36 family. It depends on Zn(2+) as a cofactor.

The protein resides in the secreted. Its function is as follows. Secreted metalloproteinase probably acting as a virulence factor. The chain is Extracellular metalloproteinase 3 (MEP3) from Trichophyton tonsurans (Scalp ringworm fungus).